The sequence spans 412 residues: Potassium channel, subfamily K, member 13 (412 aa).

Residues 1–21 (MACRSGCCCNSIGSFNEDNAR) lie on the Cytoplasmic side of the membrane. Residues 22-42 (FLMLALLIIIYLLCGAAVFSA) traverse the membrane as a helical segment. Residues 97–117 (WDFAGAFYFVGTVVSTIGFGM) constitute an intramembrane region (pore-forming). 3 residues coordinate K(+): threonine 112, isoleucine 113, and glycine 114. A selectivity filter 1 region spans residues 112 to 117 (TIGFGM). The helical transmembrane segment at 127–147 (IFLIFYGLIGCAATILFFNLF) threads the bilayer. The Cytoplasmic segment spans residues 148 to 198 (LERVITVIAFVLKFCHERRESRKAGPTQNCRRPSTDNRDRRTDSLAGWKPS). A helical membrane pass occupies residues 199-219 (VYCVMLILGVAAILVSCCASA). The pore-forming intramembrane region spans 229 to 249 (YLDALYFCFVAFSTIGFGDMV). K(+) is bound by residues threonine 242, isoleucine 243, glycine 244, and phenylalanine 245. The selectivity filter 2 stretch occupies residues 242–247 (TIGFGD). Residues 268–288 (LFILTGVCCIYSLFNVISIVI) traverse the membrane as a helical segment. Residues 289-412 (KQVLNWLLRR…NRLAETSVDR (124 aa)) are Cytoplasmic-facing. Polar residues predominate over residues 374–386 (MANGHPRQSGSSS). A disordered region spans residues 374-395 (MANGHPRQSGSSSRHNEFSGGV).

This sequence belongs to the two pore domain potassium channel (TC 1.A.1.8) family. In terms of assembly, homodimer. Heterodimer. As to expression, brain and heart.

Its subcellular location is the cell membrane. The enzyme catalyses K(+)(in) = K(+)(out). With respect to regulation, the channel conductance is activated by arachidonic acid and inhibited by Ba(2+) ions, volatile anesthetics such as halothane and antiarrhythmic drug mexiletine. Insensitive to extracellular pH change. K(+) channel that conducts outward rectifying tonic currents potentiated by purinergic signals. Homo- and heterodimerizes to form functional channels with distinct regulatory and gating properties. Contributes most of K(+) currents at the plasma membrane of resting microglia. Maintains a depolarized membrane potential required for proper ramified microglia morphology and phagocytosis, selectively mediating microglial pruning of presynaptic compartments at hippocampal excitatory synapses. Upon local release of ATP caused by neuronal injury or infection, it is potentiated by purinergic signaling and contributes to ATP-triggered K(+) efflux underlying microglial NLRP3 inflammasome assembly and IL1B release. The polypeptide is Potassium channel, subfamily K, member 13 (Danio rerio (Zebrafish)).